The following is a 142-amino-acid chain: MAIAYYAEDIQLPAIKKKAVSGWIKAVAETYGKKTGDISYIFCSDEKILEVNRQYLQHDYYTDIITFDYTEGNKISGDLFISLDTVRTNAETFHTDYNEELHRTIIHGILHLCGINDKGPGEREIMEENENRALAILPEECR.

3 residues coordinate Zn(2+): histidine 107, histidine 111, and aspartate 117.

Belongs to the endoribonuclease YbeY family. It depends on Zn(2+) as a cofactor.

Its subcellular location is the cytoplasm. Functionally, single strand-specific metallo-endoribonuclease involved in late-stage 70S ribosome quality control and in maturation of the 3' terminus of the 16S rRNA. This Parabacteroides distasonis (strain ATCC 8503 / DSM 20701 / CIP 104284 / JCM 5825 / NCTC 11152) protein is Endoribonuclease YbeY.